Reading from the N-terminus, the 173-residue chain is C-phycocyanin beta subunit (173 aa).

Asn73 is modified (N4-methylasparagine). (2R,3E)-phycocyanobilin contacts are provided by Cys83 and Cys154.

It belongs to the phycobiliprotein family. Heterodimer of an alpha and a beta subunit. Heterodimers further assemble into trimers and the trimers into hexamers. Contains two covalently linked bilin chromophores.

It is found in the cellular thylakoid membrane. Functionally, light-harvesting photosynthetic bile pigment-protein from the phycobiliprotein complex (phycobilisome, PBS). Phycocyanin is the major phycobiliprotein in the PBS rod. In Mastigocladus laminosus (Fischerella sp.), this protein is C-phycocyanin beta subunit (cpcB).